A 640-amino-acid chain; its full sequence is Protein SPT10 (640 aa).

The interval 1–30 (MLNQHTSSVPDDEHLQMAHQNSSSEVRNEA) is disordered. Positions 121 to 259 (LDYSMDTEAD…AGILKGFDVP (139 aa)) constitute an N-acetyltransferase domain. The disordered stretch occupies residues 534–565 (PHLTNNESQDHANPVNRDERDMNHSVPDLDRN). A compositionally biased stretch (basic and acidic residues) spans 549-565 (NRDERDMNHSVPDLDRN).

Functionally, required for normal transcription at a number of loci in yeast. Affects transcription at Ty1 elements, at PHO5, STE6 and ADH2. This Saccharomyces cerevisiae (strain ATCC 204508 / S288c) (Baker's yeast) protein is Protein SPT10 (SPT10).